Reading from the N-terminus, the 560-residue chain is 2-hydroxyacyl-CoA lyase (560 aa).

Residue E49 coordinates thiamine diphosphate. Mg(2+)-binding residues include D446 and N473. Positions 558 to 560 match the Peroxisomal target signal 1 (PTS1) motif; that stretch reads PRL.

It belongs to the TPP enzyme family. Mg(2+) is required as a cofactor. Requires thiamine diphosphate as cofactor.

Its subcellular location is the cytoplasm. The protein localises to the peroxisome matrix. It catalyses the reaction an (R)-2-hydroxy-long-chain-fatty acyl-CoA = a long-chain fatty aldehyde + formyl-CoA. The enzyme catalyses a 2-hydroxy-3-methyl fatty acyl-CoA = a 2-methyl-branched fatty aldehyde + formyl-CoA. Catalyzes a carbon-carbon cleavage reaction; cleaves a 2-hydroxy-3-methylacyl-CoA into formyl-CoA and a 2-methyl-branched fatty aldehyde. The polypeptide is 2-hydroxyacyl-CoA lyase (Saccharomyces cerevisiae (strain ATCC 204508 / S288c) (Baker's yeast)).